Consider the following 250-residue polypeptide: MSSNISIVAIIPARYASTRFPGKPLIQINGKTMIQCVYDQVRSTPEITEVLVATDDDRIEAEVLRFGGKVVRTLPEHPSGTDRCFEAYQKLNKPFDFIINVQGDEPFIQPEQIRTLAGILTPDVELATLIKKIEDEETLFNPNTPKVLVNANGEAIYFSRQTIPYLRQHADKKDWLANHTFFKHIGMYAYRPDILAQITQLKPSALELAESLEQLRWLESGYSIHTAVTTIETVGIDTPEDLLRVTHTSS.

The protein belongs to the KdsB family.

It is found in the cytoplasm. It carries out the reaction 3-deoxy-alpha-D-manno-oct-2-ulosonate + CTP = CMP-3-deoxy-beta-D-manno-octulosonate + diphosphate. It functions in the pathway nucleotide-sugar biosynthesis; CMP-3-deoxy-D-manno-octulosonate biosynthesis; CMP-3-deoxy-D-manno-octulosonate from 3-deoxy-D-manno-octulosonate and CTP: step 1/1. It participates in bacterial outer membrane biogenesis; lipopolysaccharide biosynthesis. Activates KDO (a required 8-carbon sugar) for incorporation into bacterial lipopolysaccharide in Gram-negative bacteria. In Cytophaga hutchinsonii (strain ATCC 33406 / DSM 1761 / CIP 103989 / NBRC 15051 / NCIMB 9469 / D465), this protein is 3-deoxy-manno-octulosonate cytidylyltransferase.